The primary structure comprises 688 residues: Potassium-transporting ATPase ATP-binding subunit (688 aa).

4 helical membrane-spanning segments follow: residues 34 to 54 (PVMF…LAIL), 62 to 82 (AMFT…ANMA), 219 to 239 (VALT…TATL), and 260 to 280 (VLVA…LSAI). Aspartate 313 (4-aspartylphosphate intermediate) is an active-site residue. Residues aspartate 350, glutamate 354, 383–390 (FSAQTRMS), and lysine 401 each bind ATP. Mg(2+)-binding residues include aspartate 524 and aspartate 528. The next 3 helical transmembrane spans lie at 594 to 614 (FAII…LNIM), 622 to 642 (AILS…PLAL), and 662 to 682 (IYGL…DLLL).

Belongs to the cation transport ATPase (P-type) (TC 3.A.3) family. Type IA subfamily. In terms of assembly, the system is composed of three essential subunits: KdpA, KdpB and KdpC.

It localises to the cell inner membrane. It catalyses the reaction K(+)(out) + ATP + H2O = K(+)(in) + ADP + phosphate + H(+). In terms of biological role, part of the high-affinity ATP-driven potassium transport (or Kdp) system, which catalyzes the hydrolysis of ATP coupled with the electrogenic transport of potassium into the cytoplasm. This subunit is responsible for energy coupling to the transport system and for the release of the potassium ions to the cytoplasm. The polypeptide is Potassium-transporting ATPase ATP-binding subunit (Yersinia pseudotuberculosis serotype O:1b (strain IP 31758)).